Here is a 178-residue protein sequence, read N- to C-terminus: Methyltransferase flvH (178 aa).

In terms of domain architecture, Post-SET spans 120 to 136 (QPFNCFCGSQNCLGLIA). Zn(2+) contacts are provided by cysteine 124, cysteine 126, and cysteine 131.

This sequence belongs to the class V-like SAM-binding methyltransferase superfamily.

It catalyses the reaction L-lysine + 2 S-adenosyl-L-methionine = N(6),N(6)-dimethyl-L-lysine + 2 S-adenosyl-L-homocysteine + 2 H(+). Its pathway is secondary metabolite biosynthesis; terpenoid biosynthesis. Its function is as follows. Methyltransferase; part of the gene cluster that mediates the biosynthesis of flavunoidine, an alkaloidal terpenoid with a tetracyclic cage-like core connected to dimethylcadaverine via a C-N bond and acylated with 5,5-dimethyl-L-pipecolate. The tetracyclic core is synthesized by the terpene cyclase flvE and the cytochrome P450 monooxygenase flvD. The terpene cyclase flvE catalyzes the cyclization of farnesyl pyrophosphate (FPP) to form (1R,4R,5S)-(+)-acoradiene and the cytochrome P450 monooxygenase flvD is then responsible for oxidative conversion of (1R,4R,5S)-(+)-acoradiene into the tetracyclic cage present in the final product flavunoidine. In parallel, the N-methyltransferase flvH dimethylates L-lysine to give N,N-dimethyl-L-Lysin which is decarboxylated by flvG to afford dimethylcadaverine. The terpene cyclase-like protein flvF is the enzyme that attaches the dimethylcadaverine precusor at the C-7 of the tetracyclic cage to yield pre-flavunoidine. The cytochrome monooxygenase flvC hydroxylates the C-10 position of pre-flavunoidine whereas the NRPS flvI acylates the terpenoid core at the hydroxylated C-10 with dimethylpipecolate to yield final flavunoidine. The bifunctional enzyme flvA and the dehydrogenase flvB are responsible for the synthesis of the dimethylpipecolate precursor. The PLP-dependent lyase domain of flvA might use L-O-acetyl-homoserine and alpha-keto-isovalerate to form an intermediary ketone that can cyclize intramolecularly to yield an imine. The imine can be reduced by flvB to yield the 6-carboxylated pipecolate. The C-terminal alpha-KG-dependent oxygenase domain of flvA is then proposed to catalyze the decarboxylation to yield dimethylpipecolate. In Aspergillus flavus (strain ATCC 200026 / FGSC A1120 / IAM 13836 / NRRL 3357 / JCM 12722 / SRRC 167), this protein is Methyltransferase flvH.